A 545-amino-acid chain; its full sequence is T-box transcription factor TBX4 (545 aa).

The segment at residues 71–251 (LHEKELWKKF…NNPFAKGFRG (181 aa)) is a DNA-binding region (T-box). The interval 479 to 509 (QSQVRERGPSASFPRERGLPQGCERKPPSPH) is disordered. Residues 482–505 (VRERGPSASFPRERGLPQGCERKP) are compositionally biased toward basic and acidic residues. Ser507 bears the Phosphoserine mark.

Its subcellular location is the nucleus. Its function is as follows. Transcriptional regulator that has an essential role in the organogenesis of lungs, pelvis, and hindlimbs. In Homo sapiens (Human), this protein is T-box transcription factor TBX4 (TBX4).